The primary structure comprises 349 residues: E3 ubiquitin-protein ligase SINA-like 10 (349 aa).

Positions 1-77 are disordered; the sequence is MARFSVCGGD…STSDDSDREV (77 aa). Residues 113–149 form an RING-type; degenerate zinc finger; sequence CPICCEPLKIPIFQCDNGHLACTLCCTKVRNRCPSCT. The SBD stretch occupies residues 163-344; the sequence is VIEASRVSCL…NLQIWIGHGR (182 aa). The segment at 166–224 adopts an SIAH-type zinc-finger fold; the sequence is ASRVSCLNAKYGCKESTSYGNRFSHEQVCVFTPCSCPILDCHYTGYYKDLNNHVRAEHK. Positions 171, 178, 190, 194, 201, 206, 218, and 223 each coordinate Zn(2+).

This sequence belongs to the SINA (Seven in absentia) family.

It carries out the reaction S-ubiquitinyl-[E2 ubiquitin-conjugating enzyme]-L-cysteine + [acceptor protein]-L-lysine = [E2 ubiquitin-conjugating enzyme]-L-cysteine + N(6)-ubiquitinyl-[acceptor protein]-L-lysine.. The protein operates within protein modification; protein ubiquitination. Its function is as follows. E3 ubiquitin-protein ligase that mediates ubiquitination and subsequent proteasomal degradation of target proteins. E3 ubiquitin ligases accept ubiquitin from an E2 ubiquitin-conjugating enzyme in the form of a thioester and then directly transfers the ubiquitin to targeted substrates. It probably triggers the ubiquitin-mediated degradation of different substrates. This is E3 ubiquitin-protein ligase SINA-like 10 from Arabidopsis thaliana (Mouse-ear cress).